The primary structure comprises 349 residues: Protein Wnt-7a (349 aa).

Positions 1-31 are cleaved as a signal peptide; that stretch reads MNRKARRCLGHLFLSLGMVYLRIGGFSTVVA. Disulfide bonds link cysteine 73–cysteine 84, cysteine 123–cysteine 131, cysteine 133–cysteine 152, cysteine 200–cysteine 214, and cysteine 202–cysteine 209. 2 N-linked (GlcNAc...) asparagine glycosylation sites follow: asparagine 83 and asparagine 127. Serine 206 carries O-palmitoleoyl serine; by PORCN lipidation. A disordered linker region spans residues 238-266; sequence VEPVRASRNKRPTFLKIKKPLSYRKPMDT. Intrachain disulfides connect cysteine 278-cysteine 309, cysteine 294-cysteine 304, cysteine 308-cysteine 348, cysteine 324-cysteine 339, cysteine 326-cysteine 336, and cysteine 331-cysteine 332. N-linked (GlcNAc...) asparagine glycosylation occurs at asparagine 295.

It belongs to the Wnt family. As to quaternary structure, forms a soluble 1:1 complex with AFM; this prevents oligomerization and is required for prolonged biological activity. The complex with AFM may represent the physiological form in body fluids. Interacts with PORCN. Interacts (via intrinsically disordered linker region) with RECK; interaction with RECK confers ligand selectivity for Wnt7 in brain endothelial cells and allows these cells to selectively respond to Wnt7. Interacts with FZD5. In terms of processing, palmitoleoylation is required for efficient binding to frizzled receptors. Depalmitoleoylation leads to Wnt signaling pathway inhibition.

Its subcellular location is the secreted. The protein localises to the extracellular space. It is found in the extracellular matrix. Ligand for members of the frizzled family of seven transmembrane receptors that functions in the canonical Wnt/beta-catenin signaling pathway. Plays an important role in embryonic development, including dorsal versus ventral patterning during limb development, skeleton development and urogenital tract development. Required for central nervous system (CNS) angiogenesis and blood-brain barrier regulation. Required for normal, sexually dimorphic development of the Mullerian ducts, and for normal fertility in both sexes. Required for normal neural stem cell proliferation in the hippocampus dentate gyrus. Required for normal progress through the cell cycle in neural progenitor cells, for self-renewal of neural stem cells, and for normal neuronal differentiation and maturation. Promotes formation of synapses via its interaction with FZD5. This chain is Protein Wnt-7a (WNT7A), found in Chlorocebus aethiops (Green monkey).